The chain runs to 372 residues: Small ribosomal subunit protein mS77 (rPPR2) (372 aa).

Residues 1 to 28 (MKSFLLSRQAIHRISLLSSKTPTFCRNF) constitute a mitochondrion transit peptide. Residues 240 to 265 (DNSIRESETVDGEVEEEGFVPSDEVE) are disordered. Positions 248-257 (TVDGEVEEEG) are enriched in acidic residues.

As to quaternary structure, component of the mitochondrial ribosome small subunit.

The protein resides in the mitochondrion. Its function is as follows. Required for karyogamy during female gametophyte development, when the two polar nuclei fuse to form the diploid central cell nucleus. This chain is Small ribosomal subunit protein mS77 (rPPR2), found in Arabidopsis thaliana (Mouse-ear cress).